The chain runs to 456 residues: MTDSGEIDPQTAEEKVTDAQTAALSLSNLSTARRNEALTAIADTIERNVDRILEANAADVADAEKQVDAGEYTQAFVDRLTLSTSKIESIAEMVRSVAEQDDPLGETLTARELDDDLNLYKVTVPIGVIGTVFESRPDALVQISALSLKSGNAVILKGGSEAERSNRVLYNCILEATPEVPSGWAQLIEAREDVQTLLEMDDAVDLIMPRGSSSFVQYVQDNTSIPVLGHTEGVCHVYVDSEADLEMATAVAYDAKVQYPAVCNAVETLLVHESVAPSFLSQMMKQYRDAGVEIRGDERTQSIVDTESNISEEIIAATEADWTTEYGDRIVSIAVVDSLTDAIDHINMYGSKHTESILTQDDNRAEQFMRAVDAASVFHNASTRFADGFRFGLGAEVGISTGKIHARGPVGLDGLTTYKYHLEGDGQQVATYAGSDAKPFDHAEFDETWPVRNDDG.

It belongs to the gamma-glutamyl phosphate reductase family.

The protein localises to the cytoplasm. The enzyme catalyses L-glutamate 5-semialdehyde + phosphate + NADP(+) = L-glutamyl 5-phosphate + NADPH + H(+). Its pathway is amino-acid biosynthesis; L-proline biosynthesis; L-glutamate 5-semialdehyde from L-glutamate: step 2/2. Its function is as follows. Catalyzes the NADPH-dependent reduction of L-glutamate 5-phosphate into L-glutamate 5-semialdehyde and phosphate. The product spontaneously undergoes cyclization to form 1-pyrroline-5-carboxylate. The chain is Gamma-glutamyl phosphate reductase from Haloquadratum walsbyi (strain DSM 16790 / HBSQ001).